The primary structure comprises 536 residues: CRISPR-associated DNA-binding protein Cas12m (536 aa).

The recognition domain (REC1-N) stretch occupies residues 1 to 59 (MPFGKKARHVKAYQFGADAPQEGMEAVLEQHRLRTDYYNALVEMELRQREERTALLANL). The tract at residues 60 to 105 (AAESGLESPNQVYERLKAAGEKGIRKHPEYVAARERQKALYGHPRL) is recognition domain (REC2). The segment at 106 to 159 (LELQSRQREERNALRRSFGAKGLYSSNYLDVERAFDKARQSPELRFRRYSPHEG) is recognition domain (REC1-C). The tract at residues 160-257 (RLAVLYTEGL…RWTVSVVVEV (98 aa)) is wedge domain (WED). Residues 258–270 (EGPPVASPTGRGA) form a linker region. Positions 271–481 (VAVDLGWRRV…QRGKPVRKLN (211 aa)) are ruvC-I. The interval 482-516 (PAHTTTDCHACGGALVGDPAKELRLYCPTCERFYD) is target nucleic-acid binding (TNB). Zn(2+) contacts are provided by cysteine 489, cysteine 492, cysteine 508, and cysteine 511. The ruvC-II stretch occupies residues 517–536 (QDENAARNLLRRAQEVQAQV). Residue aspartate 518 coordinates Mg(2+).

This sequence belongs to the CRISPR-associated DNA-binding protein Cas12m family. Mg(2+) serves as cofactor. Zn(2+) is required as a cofactor.

With respect to regulation, pre-crRNA processing is inhibited by EDTA. In terms of biological role, CRISPR (clustered regularly interspaced short palindromic repeat), is an adaptive immune system that provides protection against mobile genetic elements (viruses, transposable elements and conjugative plasmids). CRISPR clusters contain sequences complementary to antecedent mobile elements and target invading nucleic acids. CRISPR clusters are transcribed and processed into CRISPR RNA (crRNA). Recognizes a short motif in the CRISPR repeat sequences (the 5' PAM or protospacer adjacent motif, 5'-TT/CN-3' in this organism) to help distinguish self versus nonself, as targets within the bacterial CRISPR locus do not have PAMs. Cas12m-crRNA binds DNA in a PAM-dependent, crRNA-guided fashion. DNA-binding probably inhibits transcription, leading to gene silencing. No dsDNA, ssDNA or RNA nuclease activity is seen for the crRNA-Cas12m complex. Upon expression in E.coli as a CRISPR region preferentially binds to its associated crRNA. Is required to process pre-crRNA to mature crRNA without a tracrRNA; processing is Mg(2+)-dependent and does not require the predicted RuvC domain catalytic site. The protein is CRISPR-associated DNA-binding protein Cas12m of Allomeiothermus silvanus (strain ATCC 700542 / DSM 9946 / NBRC 106475 / NCIMB 13440 / VI-R2) (Thermus silvanus).